A 304-amino-acid chain; its full sequence is Phosphatidylinositol mannoside acyltransferase (304 aa).

His-126 acts as the Proton acceptor in catalysis. Hexadecanoyl-CoA-binding residues include His-126 and Arg-164. Glu-200 is an active-site residue. Positions 206 and 229 each coordinate hexadecanoyl-CoA.

This sequence belongs to the LpxL/LpxM/LpxP family. Monomer.

The protein localises to the cell inner membrane. The catalysed reaction is a 2,6-O-bis(alpha-D-mannopyranosyl)-1-phosphatidyl-1D-myo-inositol + an acyl-CoA = a 2-O-(alpha-D-mannosyl)-6-O-(6-O-acyl-alpha-D-mannosyl)-1-phosphatidyl-1D-myo-inositol + CoA. It catalyses the reaction a 1,2-diacyl-sn-glycero-3-phospho-[alpha-D-mannopyranosyl-(1&lt;-&gt;6)-D-myo-inositol] + an acyl-CoA = a 1,2-diacyl-sn-glycero-3-phospho-[alpha-D-6-acyl-mannopyranosyl-(1&lt;-&gt;6)-D-myo-inositol] + CoA. The protein operates within phospholipid metabolism; phosphatidylinositol metabolism. Catalyzes the transfer of a palmitoyl moiety from palmitoyl-CoA to the 6-position of the mannose ring linked to the 2-position of myo-inositol in phosphatidyl-myo-inositol monomannoside (PIM1) or dimannoside (PIM2). The polypeptide is Phosphatidylinositol mannoside acyltransferase (Mycolicibacterium smegmatis (strain ATCC 700084 / mc(2)155) (Mycobacterium smegmatis)).